A 329-amino-acid chain; its full sequence is Prostaglandin reductase 1 (329 aa).

At Thr-18 the chain carries Phosphothreonine. Ser-20 bears the Phosphoserine mark. NADP(+) is bound by residues 152-155 (GAVG), Lys-178, Tyr-193, Asn-217, 239-245 (CGAISTY), 270-272 (FIV), and Asn-321. N6-(2-hydroxyisobutyryl)lysine; alternate is present on Lys-178. Lys-178 carries the N6-acetyllysine; alternate modification.

The protein belongs to the NADP-dependent oxidoreductase L4BD family. Monomer or homodimer. In terms of tissue distribution, ubiquitously distributed in various tissues and leukocytes, the kidney and liver had the highest enzyme activities.

The protein localises to the cytoplasm. The enzyme catalyses 13,14-dihydro-15-oxo-prostaglandin E1 + NADP(+) = 15-oxoprostaglandin E1 + NADPH + H(+). The catalysed reaction is 13,14-dihydro-15-oxo-prostaglandin E2 + NADP(+) = 15-oxoprostaglandin E2 + NADPH + H(+). It catalyses the reaction 13,14-dihydro-15-oxo-prostaglandin E2 + NAD(+) = 15-oxoprostaglandin E2 + NADH + H(+). It carries out the reaction 13,14-dihydro-15-oxo-prostaglandin F1alpha + NADP(+) = 15-oxoprostaglandin F1alpha + NADPH + H(+). The enzyme catalyses 13,14-dihydro-15-oxo-PGF2alpha + NADP(+) = 15-oxoprostaglandin F2alpha + NADPH + H(+). The catalysed reaction is leukotriene B4 + NADP(+) = 12-oxo-leukotriene B4 + NADPH + H(+). It catalyses the reaction 20-hydroxy-leukotriene B4 + NADP(+) = 12-oxo-20-hydroxy-leukotriene B4 + NADPH + H(+). It carries out the reaction 6-trans-leukotriene B4 + NADP(+) = 12-oxo-(5S)-hydroxy-(6E,8E,10E,14Z)-eicosatetraenoate + NADPH + H(+). The enzyme catalyses (5S,12S)-dihydroxy-(6E,10E,12E,14Z)-eicosatetraenoate + NADP(+) = 12-oxo-(5S)-hydroxy-(6E,8E,10E,14Z)-eicosatetraenoate + NADPH + H(+). The catalysed reaction is 15-oxo-(5S,6R)-dihydroxy-(7E,9E,11Z,13E)-eicosatetraenoate + NADH + H(+) = 15-oxo-(5S,6R)-dihydroxy-(7E,9E,11Z)-eicosatrienoate + NAD(+). It catalyses the reaction an n-alkanal + NADP(+) = an alk-2-enal + NADPH + H(+). It carries out the reaction hexanal + NADP(+) = (E)-hex-2-enal + NADPH + H(+). The enzyme catalyses octanal + NADP(+) = (2E)-octenal + NADPH + H(+). The catalysed reaction is decanal + NADP(+) = (2E)-decenal + NADPH + H(+). It catalyses the reaction dodecanal + NADP(+) = (2E)-dodecenal + NADPH + H(+). It carries out the reaction 4-hydroxynonanal + NADP(+) = (E)-4-hydroxynon-2-enal + NADPH + H(+). The enzyme catalyses pentan-2-one + NADP(+) = (E)-pent-3-en-2-one + NADPH + H(+). The catalysed reaction is nonan-2-one + NADP(+) = (3E)-nonen-2-one + NADPH + H(+). With respect to regulation, down-regulated by nonsteroidal anti-inflammatory drugs diclofenac, indomethacin and niflumic acid. Functionally, NAD(P)H-dependent oxidoreductase involved in metabolic inactivation of pro- and anti-inflammatory eicosanoids: prostaglandins (PG), leukotrienes (LT) and lipoxins (LX). Preferentially uses NADPH over NADH as cofactor. Catalyzes with high efficiency the reduction of the 13,14 double bond of 15-oxoPGs, including 15-oxo-PGE1, 15-oxo-PGE2, 15-oxo-PGF1-alpha and 15-oxo-PGF2-alpha. Catalyzes with lower efficiency the oxidation of the hydroxyl group at C12 of LTB4 and its derivatives, converting them into biologically less active 12-oxo-LTB4 metabolites. Reduces 15-oxo-LXA4 to 13,14 dihydro-15-oxo-LXA4 and may promote neutrophil recruitment at the inflammatory site. Plays a role in metabolic detoxification of alkenals and ketones. Reduces alpha,beta-unsaturated alkenals and ketones, particularly those with medium-chain length, showing highest affinity toward (2E)-decenal and (3E)-3-nonen-2-one. May inactivate 4-hydroxy-2-nonenal, a cytotoxic lipid constituent of oxidized low-density lipoprotein particles. The chain is Prostaglandin reductase 1 (PTGR1) from Sus scrofa (Pig).